The primary structure comprises 640 residues: Threonine--tRNA ligase (640 aa).

A catalytic region spans residues 224-525 (DHRKLGKELD…LTEHYAGAFP (302 aa)). Zn(2+) contacts are provided by C323, H374, and H502.

It belongs to the class-II aminoacyl-tRNA synthetase family. Homodimer. Zn(2+) serves as cofactor.

It is found in the cytoplasm. It carries out the reaction tRNA(Thr) + L-threonine + ATP = L-threonyl-tRNA(Thr) + AMP + diphosphate + H(+). In terms of biological role, catalyzes the attachment of threonine to tRNA(Thr) in a two-step reaction: L-threonine is first activated by ATP to form Thr-AMP and then transferred to the acceptor end of tRNA(Thr). Also edits incorrectly charged L-seryl-tRNA(Thr). The chain is Threonine--tRNA ligase from Tropheryma whipplei (strain Twist) (Whipple's bacillus).